The sequence spans 194 residues: UPF0232 protein in recF-gyrB intergenic region (194 aa).

Over residues 1 to 14 (MTGPFDDDGPEEDA) the composition is skewed to acidic residues. Residues 1–81 (MTGPFDDDGP…GPGPDARDPQ (81 aa)) are disordered. A compositionally biased stretch (basic and acidic residues) spans 30–52 (DLVRRTLEEARGAARSQGKDVGR).

This sequence belongs to the UPF0232 family.

This Mycolicibacterium smegmatis (Mycobacterium smegmatis) protein is UPF0232 protein in recF-gyrB intergenic region.